The sequence spans 510 residues: Leucine-rich repeat protein lrrA (510 aa).

LRR repeat units lie at residues 14-34, 35-59, 60-82, 84-106, 107-130, 132-152, 153-176, 177-200, 202-222, 224-245, 246-270, 272-292, 293-315, 316-340, 341-363, 365-386, 387-408, 410-432, 433-458, and 460-478; these read YRKR…PPTI, GALQ…IGKL, SKVE…IGSL, TLKQ…NIGA, LKNL…ISNC, ALEY…EFGK, LYNL…ISGW, VKLE…CLLG, LSTL…LSSM, SLTN…LSNL, RQLK…LLSE, IELD…IATL, INLQ…VGNL, INLQ…IGKL, VNLK…IASM, ALKE…IGEL, SGLT…SFGN, SELQ…LDGL, KSCT…LIGL, and ILDV…IVMK.

The protein resides in the cytoplasm. Its function is as follows. Involved in cytoskeleton remodeling, which is needed for normal chemotactic aggregation and efficient cell sorting during multicellular morphogenesis. This chain is Leucine-rich repeat protein lrrA (lrrA), found in Dictyostelium discoideum (Social amoeba).